The primary structure comprises 558 residues: Deleted in azoospermia protein 2 (558 aa).

Residues 1-10 are compositionally biased toward polar residues; sequence MSAANPETPN. Residues 1 to 27 form a disordered region; it reads MSAANPETPNSTISREASTQSSSAAAS. Residues 11–27 are compositionally biased toward low complexity; the sequence is STISREASTQSSSAAAS. Residues 40-115 form the RRM domain; sequence NTVFVGGIDA…KKLKLGPAIR (76 aa). DAZ domains lie at 167-190, 191-214, 215-238, 239-262, 263-286, 287-310, 311-334, 335-358, 359-382, 383-406, 407-430, 431-454, 455-478, 479-502, and 503-526; these read AYSA…YNYQ, EYPT…YNYQ, PFPA…YNYQ, and AFPA…YNYQ.

This sequence belongs to the RRM DAZ family. Forms a heterodimer with BOLL and DAZL. Interacts with PUM2, DAZAP1, DAZAP2, DZIP1 and DZIP3. As to expression, testis specific.

The protein localises to the cytoplasm. It localises to the nucleus. Functionally, RNA-binding protein that plays an essential role in spermatogenesis. May act by binding to the 3'-UTR of mRNAs and regulating their translation. The protein is Deleted in azoospermia protein 2 (DAZ2) of Homo sapiens (Human).